The primary structure comprises 259 residues: UPF0246 protein NMA1114 (259 aa).

The protein belongs to the UPF0246 family.

The sequence is that of UPF0246 protein NMA1114 from Neisseria meningitidis serogroup A / serotype 4A (strain DSM 15465 / Z2491).